The primary structure comprises 159 residues: NAD(P)H-quinone oxidoreductase subunit J, chloroplastic (159 aa).

This sequence belongs to the complex I 30 kDa subunit family. As to quaternary structure, NDH is composed of at least 16 different subunits, 5 of which are encoded in the nucleus.

It localises to the plastid. The protein localises to the chloroplast thylakoid membrane. The enzyme catalyses a plastoquinone + NADH + (n+1) H(+)(in) = a plastoquinol + NAD(+) + n H(+)(out). The catalysed reaction is a plastoquinone + NADPH + (n+1) H(+)(in) = a plastoquinol + NADP(+) + n H(+)(out). In terms of biological role, NDH shuttles electrons from NAD(P)H:plastoquinone, via FMN and iron-sulfur (Fe-S) centers, to quinones in the photosynthetic chain and possibly in a chloroplast respiratory chain. The immediate electron acceptor for the enzyme in this species is believed to be plastoquinone. Couples the redox reaction to proton translocation, and thus conserves the redox energy in a proton gradient. In Triticum aestivum (Wheat), this protein is NAD(P)H-quinone oxidoreductase subunit J, chloroplastic.